The sequence spans 37 residues: Potassium channel toxin alpha-KTx 4.8 (37 aa).

2 disulfide bridges follow: cysteine 13–cysteine 33 and cysteine 17–cysteine 35.

Belongs to the short scorpion toxin superfamily. Potassium channel inhibitor family. Alpha-KTx 04 subfamily. Expressed by the venom gland.

It localises to the secreted. Reversible blocker of voltage-gated potassium channel Kv1.2/KCNA2 (Kd=65 nM) and calcium-activated potassium channels KCa2.2/KCNN2 (Kd=575 nM) and KCa3.1/KCNN4 (Kd=59 nM). The chain is Potassium channel toxin alpha-KTx 4.8 from Centruroides margaritatus (Central American bark Scorpion).